A 294-amino-acid chain; its full sequence is 33 kDa chaperonin (294 aa).

2 cysteine pairs are disulfide-bonded: Cys-239–Cys-241 and Cys-272–Cys-275.

It belongs to the HSP33 family. In terms of processing, under oxidizing conditions two disulfide bonds are formed involving the reactive cysteines. Under reducing conditions zinc is bound to the reactive cysteines and the protein is inactive.

The protein resides in the cytoplasm. Its function is as follows. Redox regulated molecular chaperone. Protects both thermally unfolding and oxidatively damaged proteins from irreversible aggregation. Plays an important role in the bacterial defense system toward oxidative stress. In Lacticaseibacillus casei (strain BL23) (Lactobacillus casei), this protein is 33 kDa chaperonin.